The following is a 421-amino-acid chain: Synaptotagmin-12 (421 aa).

The Vesicular portion of the chain corresponds to 1–18; that stretch reads MAVDVTEYHLSVIKSPPG. A helical membrane pass occupies residues 19 to 39; sequence WEVGVYAAGALALLGIAAVSL. The Cytoplasmic portion of the chain corresponds to 40–421; that stretch reads WKLWTSGSFP…VSMWHPVRRN (382 aa). Residue S97 is modified to Phosphoserine; by PKA. Phosphoserine is present on residues S99 and S214. C2 domains follow at residues 152 to 272 and 283 to 416; these read TLGQ…SGWL and AVGE…SMWH.

The protein belongs to the synaptotagmin family. In terms of assembly, homodimer. Can also form heterodimers. Interacts with SYT1. In terms of processing, phosphorylation of Ser-97 is required for mossy-fiber long-term potentiation. As to expression, expressed in the brain, specifically by neurons in the hippocampus, and in the adrenal medulla (at protein level).

Its subcellular location is the cytoplasmic vesicle. The protein resides in the secretory vesicle. It localises to the synaptic vesicle membrane. Its function is as follows. Synaptic vesicle phosphoprotein that enhances spontaneous neurotransmitter release but does not effect induced neurotransmitter release. Unlike other synaptotagmins, it does not bind Ca(2+) or phospholipids. Essential for mossy-fiber long-term potentiation in the hippocampus. This chain is Synaptotagmin-12, found in Mus musculus (Mouse).